Here is a 222-residue protein sequence, read N- to C-terminus: Glutathione S-transferase alpha-4 (222 aa).

M1 carries the N-acetylmethionine modification. A GST N-terminal domain is found at 3–83 (VKPKLYYFQG…YLAAKYNLYG (81 aa)). Residues Y9, 54–55 (QV), and 67–68 (QT) contribute to the glutathione site. One can recognise a GST C-terminal domain in the interval 85-208 (DLKERVRIDM…QPGSQRKPPP (124 aa)).

The protein belongs to the GST superfamily. Alpha family. Homodimer.

It is found in the cytoplasm. It carries out the reaction RX + glutathione = an S-substituted glutathione + a halide anion + H(+). In terms of biological role, conjugation of reduced glutathione to a wide number of exogenous and endogenous hydrophobic electrophiles. The chain is Glutathione S-transferase alpha-4 (Gsta4) from Rattus norvegicus (Rat).